Here is a 319-residue protein sequence, read N- to C-terminus: ATP-dependent 6-phosphofructokinase (319 aa).

Glycine 11 contributes to the ATP binding site. 21-25 (RAVVR) contributes to the ADP binding site. ATP contacts are provided by residues 72 to 73 (RC) and 102 to 105 (GEGS). Glutamate 103 contributes to the Mg(2+) binding site. Residue 126–128 (TID) coordinates substrate. Aspartate 128 (proton acceptor) is an active-site residue. Lysine 155 provides a ligand contact to ADP. Substrate contacts are provided by residues arginine 163 and 170–172 (MGR). ADP contacts are provided by residues 186-188 (GAE), arginine 212, and 214-216 (KIN). Substrate contacts are provided by residues glutamate 223, arginine 244, and 250–253 (HVQR).

Belongs to the phosphofructokinase type A (PFKA) family. ATP-dependent PFK group I subfamily. Prokaryotic clade 'B1' sub-subfamily. In terms of assembly, homotetramer. The cofactor is Mg(2+).

It is found in the cytoplasm. The catalysed reaction is beta-D-fructose 6-phosphate + ATP = beta-D-fructose 1,6-bisphosphate + ADP + H(+). It functions in the pathway carbohydrate degradation; glycolysis; D-glyceraldehyde 3-phosphate and glycerone phosphate from D-glucose: step 3/4. Its activity is regulated as follows. Allosterically activated by ADP and other diphosphonucleosides, and allosterically inhibited by phosphoenolpyruvate. Its function is as follows. Catalyzes the phosphorylation of D-fructose 6-phosphate to fructose 1,6-bisphosphate by ATP, the first committing step of glycolysis. The polypeptide is ATP-dependent 6-phosphofructokinase (Thermotoga petrophila (strain ATCC BAA-488 / DSM 13995 / JCM 10881 / RKU-1)).